A 250-amino-acid polypeptide reads, in one-letter code: Protein lin-28 homolog B (250 aa).

Disordered regions lie at residues 1–27 (MAEA…ESPL) and 98–126 (RVTG…KPKG). Over residues 9–18 (GGEEPGRLPE) the composition is skewed to basic and acidic residues. A CSD domain is found at 29-102 (HGAGHCKWFN…GLESIRVTGP (74 aa)). A compositionally biased stretch (basic residues) spans 114 to 125 (PKGKTVQKRKPK). 2 consecutive CCHC-type zinc fingers follow at residues 127–144 (DRCY…ECSL) and 149–166 (KKCH…NCPH). Zn(2+)-binding residues include Cys129, Cys132, His137, Cys142, Cys151, Cys154, His159, and Cys164. The disordered stretch occupies residues 165-250 (PHKTVSQQPT…GPSVQKRKKT (86 aa)). The segment covering 168-177 (TVSQQPTSSQ) has biased composition (polar residues). Low complexity predominate over residues 200 to 209 (GYSSPSYSQE). A compositionally biased stretch (basic and acidic residues) spans 210–219 (GRSEISERSG).

Belongs to the lin-28 family.

It is found in the nucleus. The protein localises to the nucleolus. Its function is as follows. Suppressor of specific microRNA (miRNA) biogenesis. Binds target primary miRNA transcripts and sequester them in the nucleolus, away from the microprocessor complex, hence preventing their processing into mature miRNA. The specific interaction with target pri-miRNAs occurs via an 5'-GGAG-3' motif in the pre-miRNA terminal loop. This is Protein lin-28 homolog B (LIN28B) from Gallus gallus (Chicken).